A 1248-amino-acid polypeptide reads, in one-letter code: MASHQYHQIANLLEKMTSTDKDFRFMATNDLMTELQKDSIILDDESEKKVVRMVLKLLEDKNGEVQNLAVKCLGPLVNKVKEIQVETIVDSLCANMMSNTEQLRDISSIGLKTVIAELPQSSNSLAPNVCQRITGKLSTAIEKEDVSVKLESLDILADLLSRFGEFLVPFHSTILKALMPQLASSRQAVRKRTIVALSFLLIQANSNAYNGVIDHLLDGLENPPNPAAIRTYIQCLASICRQAGHRLCNHIDRSMLLLSQYSQRDDDELREFCLQACEAFVMRCPDAINPHIPMILELCLNYITYDPNYNYETDDGDTGNAMDTEDDEYVDSEEYSDDDDMSWKVRRAAAKCLEVLISTRQELVEDFYRSLSPALIARFKEREENVKSDIFHAYVALLKNTRLTDDVANDHDSMDQVSGPTSLLIEQLPLIVKAIQPLMREKSMKTRQDCFLLLRELLNSLPGALGPYLDSIVPGISYSLNDKSSTSNMKIESLGFLYSLLQGHPPHVFHPHIPLLVPLVVTSVFDPFYKIATEALLVLQQLVKVIRPLEPNAAKSDFDAPSFVGQVYSCTLQKLKVTDVDQEVKERAIACMGQIIANMGDMLQNELAVCLPIFMERLKNEVTRLSSVKALTLIAASSLRIDLTPILHDVLPALGTFLRKNHRALKLHSLDLINKIVINYSSNFEANLLQTAIVEIPPLISDSDLHVAQYSLTLLSTVARRQPQALVGIHEQFLRSVLILVRSPLLQGSALNCTLELFQALVQTQLSGLDYHSLVSKLMAPVLGGNGDVKSRATAGAPSEVVQLHKQAYHSSAKCIAALTQQCPQVATPLATKLITDLQKRNDTEIIFCLLTIGEIGRHFDLSSIQVLPQTIIECFGATSEDVKAAASHALGAVSVGSLQTYLPLILHEIEVQPKRQYLLLHSLKEVISSLSVSPSGLAQLLPSVPSIWDQLFKHCECSEEGSRNVVAECLGKLVLVNPDELLPQLQQALRSESATMRTVVVSSVKFTISDQPQPIDVLLKQNIGEFLFALRDPEPQVRRVALVAFNSAVHNKPSLVRDLLPTLLPWLYSETKVKSELIREVEMGPFKHTVDDGLDIRKAAFECMYTLLEQGLDRVDVMQFLDHVQAGLCDHYDIKMLTYLMTARLAILCPDKVLLRLDQFIQQLRDTCTHKVKANSVKQEYEKQDELKRSALRAVSALSQIPKANKNQQLVDFLKSIKETPELNKIFEYIQKDSITGSSDIIVMDQS.

HEAT repeat units follow at residues 44–82 (DESEKKVVRMVLKLLEDKNGEVQNLAVKCLGPLVNKVKE), 127–165 (PNVCQRITGKLSTAIEKEDVSVKLESLDILADLLSRFGE), 168–206 (VPFHSTILKALMPQLASSRQAVRKRTIVALSFLLIQANS), 365–403 (EDFYRSLSPALIARFKEREENVKSDIFHAYVALLKNTRL), 425–463 (IEQLPLIVKAIQPLMREKSMKTRQDCFLLLRELLNSLPG), 510–548 (HPHIPLLVPLVVTSVFDPFYKIATEALLVLQQLVKVIRP), 604–642 (QNELAVCLPIFMERLKNEVTRLSSVKALTLIAASSLRID), 644–682 (TPILHDVLPALGTFLRKNHRALKLHSLDLINKIVINYSS), 861–900 (DLSSIQVLPQTIIECFGATSEDVKAAASHALGAVSVGSLQ), 976–1014 (LVNPDELLPQLQQALRSESATMRTVVVSSVKFTISDQPQ), and 1054–1093 (PSLVRDLLPTLLPWLYSETKVKSELIREVEMGPFKHTVDD).

Belongs to the CAND family.

Its function is as follows. Key assembly factor of SCF (SKP1-CUL1-F-box protein) E3 ubiquitin ligase complexes that promotes the exchange of the substrate-recognition F-box subunit in SCF complexes, thereby playing a key role in the cellular repertoire of SCF complexes. Acts as a F-box protein exchange factor. Probably plays a similar role in other cullin-RING E3 ubiquitin ligase complexes. This is Cullin-associated NEDD8-dissociated protein 1 (Cand1) from Drosophila melanogaster (Fruit fly).